The primary structure comprises 92 residues: Phosphoribosyl-ATP pyrophosphatase (92 aa).

This sequence belongs to the PRA-PH family.

It is found in the cytoplasm. It catalyses the reaction 1-(5-phospho-beta-D-ribosyl)-ATP + H2O = 1-(5-phospho-beta-D-ribosyl)-5'-AMP + diphosphate + H(+). It participates in amino-acid biosynthesis; L-histidine biosynthesis; L-histidine from 5-phospho-alpha-D-ribose 1-diphosphate: step 2/9. In Leptospira borgpetersenii serovar Hardjo-bovis (strain JB197), this protein is Phosphoribosyl-ATP pyrophosphatase.